The sequence spans 151 residues: Large ribosomal subunit protein bL9 (151 aa).

It belongs to the bacterial ribosomal protein bL9 family.

Functionally, binds to the 23S rRNA. The sequence is that of Large ribosomal subunit protein bL9 from Chloroherpeton thalassium (strain ATCC 35110 / GB-78).